The following is a 243-amino-acid chain: UDP-2,3-diacylglucosamine hydrolase (243 aa).

Mn(2+) contacts are provided by D9, H11, D42, N79, and H114. Residue 79–80 participates in substrate binding; that stretch reads NR. D122, S160, N164, and H195 together coordinate substrate. 2 residues coordinate Mn(2+): H195 and H197.

The protein belongs to the LpxH family. Mn(2+) serves as cofactor.

Its subcellular location is the cell inner membrane. It catalyses the reaction UDP-2-N,3-O-bis[(3R)-3-hydroxytetradecanoyl]-alpha-D-glucosamine + H2O = 2-N,3-O-bis[(3R)-3-hydroxytetradecanoyl]-alpha-D-glucosaminyl 1-phosphate + UMP + 2 H(+). The protein operates within glycolipid biosynthesis; lipid IV(A) biosynthesis; lipid IV(A) from (3R)-3-hydroxytetradecanoyl-[acyl-carrier-protein] and UDP-N-acetyl-alpha-D-glucosamine: step 4/6. In terms of biological role, hydrolyzes the pyrophosphate bond of UDP-2,3-diacylglucosamine to yield 2,3-diacylglucosamine 1-phosphate (lipid X) and UMP by catalyzing the attack of water at the alpha-P atom. Involved in the biosynthesis of lipid A, a phosphorylated glycolipid that anchors the lipopolysaccharide to the outer membrane of the cell. This is UDP-2,3-diacylglucosamine hydrolase from Coxiella burnetii (strain RSA 331 / Henzerling II).